A 191-amino-acid chain; its full sequence is MASPSCASTLPWTAAAFSYPRRLQTRRAPSLVIVAQGRVKKYRQVILKDDIDEISGKKGDTMKVRAGFYRNFLLPKGKATLLTPDVLKEMQLEQERIEAEKKRVKEEAQQLARVFETIGAFKVPRKGGKGKQIFGSVTAQDLVDIIKSQLNRDVDKRLVEVPEIREVGEYVAEIKLHPDVTAKVRLTVYTK.

The N-terminal 35 residues, 1–35 (MASPSCASTLPWTAAAFSYPRRLQTRRAPSLVIVA), are a transit peptide targeting the chloroplast.

This sequence belongs to the bacterial ribosomal protein bL9 family. In terms of assembly, part of the 50S ribosomal subunit.

Its subcellular location is the plastid. The protein localises to the chloroplast. Functionally, binds to the 23S rRNA. This Triticum aestivum (Wheat) protein is Large ribosomal subunit protein bL9c (RPL9).